The primary structure comprises 506 residues: MMITLTGHTLTVEEMKRLLLEGEGVTACPTSMQKVAECREVVEKIVEDGKVVYGITTGFGKFSDVLIQKDDVKALQHNLIQSHACGIGDPFPEEVSRGMLILRANTMLKGVSGVRPLVVNMLLEFVNRKIHPVVPQQGSLGASGDLAPLSHLALVLLGEGEVFYKGKRVHAMVALTEEGLEPIELEAKEGLALINGTQAMTAQGVLSYIEAEATAYQAELIASMTIEGLQGIIDAFDENVHKARGYKEQVDVASRIRDILHDSKLTTKQGELRVQDAYSLRCIPQVHGASWQVLNYVKEKLEIEMNAATDNPLIFDGGEKVISGGNFHGQPIAFAMDFLKVGMAELANISERRIERLVNPQLNDLPPFLSPEPGLQSGAMIMQYAAASLVSENKTLAHPASVDSIPSSANQEDHVSMGTIASRHAHQIIQNVRRVLSIEMICAMQAAEYRGIENMSTVTKSFYHQGRQQVPSITNDRIFSTDIENIAHWLKASDSIKERLDVNAAL.

Positions 142-144 (ASG) form a cross-link, 5-imidazolinone (Ala-Gly). Ser143 is modified (2,3-didehydroalanine (Ser)).

It belongs to the PAL/histidase family. Contains an active site 4-methylidene-imidazol-5-one (MIO), which is formed autocatalytically by cyclization and dehydration of residues Ala-Ser-Gly.

It is found in the cytoplasm. It catalyses the reaction L-histidine = trans-urocanate + NH4(+). Its pathway is amino-acid degradation; L-histidine degradation into L-glutamate; N-formimidoyl-L-glutamate from L-histidine: step 1/3. This is Histidine ammonia-lyase from Bacillus cereus (strain ATCC 14579 / DSM 31 / CCUG 7414 / JCM 2152 / NBRC 15305 / NCIMB 9373 / NCTC 2599 / NRRL B-3711).